The sequence spans 164 residues: HTH-type transcriptional regulator IscR (164 aa).

In terms of domain architecture, HTH rrf2-type spans 2-131 (RLTSKGRYAV…NNITLAELVN (130 aa)). Residues 28 to 51 (LADISERQGISLSYLEQLFSRLRK) constitute a DNA-binding region (H-T-H motif). Positions 92, 98, and 104 each coordinate [2Fe-2S] cluster. Residues Cys-92, Cys-98, and Cys-104 each coordinate a metal cation. Positions 145–164 (DTRRTANGRPQETINVNLRA) are disordered. Positions 152–164 (GRPQETINVNLRA) are enriched in polar residues.

[2Fe-2S] cluster serves as cofactor.

Regulates the transcription of several operons and genes involved in the biogenesis of Fe-S clusters and Fe-S-containing proteins. In Serratia proteamaculans (strain 568), this protein is HTH-type transcriptional regulator IscR.